Consider the following 396-residue polypeptide: Acyl-[acyl-carrier-protein] desaturase, chloroplastic (396 aa).

Residues methionine 1–methionine 33 constitute a chloroplast transit peptide. Positions 138, 176, 179, 229, 262, and 265 each coordinate Fe cation.

The protein belongs to the fatty acid desaturase type 2 family. As to quaternary structure, homodimer. Fe(2+) is required as a cofactor.

Its subcellular location is the plastid. It localises to the chloroplast. The protein operates within lipid metabolism; fatty acid metabolism. Functionally, introduces a cis double bond in the acyl chain of an acyl-[acyl-carrier protein]. This Cucumis sativus (Cucumber) protein is Acyl-[acyl-carrier-protein] desaturase, chloroplastic.